A 446-amino-acid chain; its full sequence is Pre-rRNA-processing protein crb3/ipi3 (446 aa).

WD repeat units lie at residues 74-113 (ILPEILICVQSSPCGSWLAAGTEKGNLYIWSLKSGALIYF), 116-155 (AHYQPLTILKFSNDGMVLFTASNDGDVFAWLISTLVDQNS), 172-214 (GHKR…LLTT), 216-257 (ALPS…SNNV), and 294-333 (SCQSPITTLTVSFDASLLISGDKDGNVLVWDSVSRQVLRR).

This sequence belongs to the WD repeat IPI3/WDR18 family. As to quaternary structure, component of the RIX1 complex, composed of ipi1, rix1/ipi2 and crb3/ipi3 in a 1:2:2 stoichiometry. The complex interacts (via rix1) with mdn1 (via its hexameric AAA ATPase ring) and the pre-60S ribosome particles. Interacts with rix1, gcr3 and Las1.

It is found in the nucleus. Its subcellular location is the chromosome. Functionally, required for both pre-rRNA processing and heterochromatic gene silencing. Its function is as follows. Component of the RIX1 complex required for processing of ITS2 sequences from 35S pre-rRNA. The sequence is that of Pre-rRNA-processing protein crb3/ipi3 (crb3) from Schizosaccharomyces pombe (strain 972 / ATCC 24843) (Fission yeast).